A 473-amino-acid polypeptide reads, in one-letter code: MATVAEQWVLVEMVQALYEAPAYHLILEGILILWIIRLLFSKTYKLQERSDLTLKEKEELIEEWQPEPLVPPVSKDHPALNYNIVSGPPSHNIVVNGKECINFASFNFLGLLDNPRLKAAALASLKKYGVGTCGPRGFYGTFDVHLDLEDRLAKFMKTEEAIIYSYGFATIASAIPAYSKRGDIVFVDKAACFAIQKGLQASRSDIKVFNHNDMDDLERLLKEQEIEDQKNPRKARVTRRFIIVEGLYMNTGTVCPLPELVKLKYKYKARIFLEESLSFGVLGEHGRGVTEHFGISIDDIDLISANMENSLASIGGFCCGRSFVIDHQRLSGQGYCFSASLPPLLAAAAIEALNIMEENPGIFAVLKEKCKRIHKALQGIPGLKVVGESISPALHLQLEETTGCRERDVKLLQEIVTQCMDRGIALTQARYLEKEEKYLPPPSIRVVVTVEQTEEDLEKAASTISEVAQTVLL.

Topologically, residues 1–15 (MATVAEQWVLVEMVQ) are lumenal. Positions 1 to 66 (MATVAEQWVL…KEELIEEWQP (66 aa)) are interaction with SPTLC2. The helical transmembrane segment at 16–36 (ALYEAPAYHLILEGILILWII) threads the bilayer. Topologically, residues 37-473 (RLLFSKTYKL…ISEVAQTVLL (437 aa)) are cytoplasmic. Y164 is subject to Phosphotyrosine; by ABL.

Belongs to the class-II pyridoxal-phosphate-dependent aminotransferase family. Component of the serine palmitoyltransferase (SPT) complex, which is also composed of SPTLC2 or SPTLC3 and SPTSSA or SPTSSB. The heterodimer with SPTLC2 or SPTLC3 forms the catalytic core of the enzyme, while SPTSSA or SPTSSB subunits determine substrate specificity. SPT also interacts with ORMDL proteins, especially ORMDL3, which negatively regulate SPT activity in the presence of ceramides. Forms dimers of heterodimers with SPTLC2. Interacts with RTN4. Requires pyridoxal 5'-phosphate as cofactor. Post-translationally, phosphorylation at Tyr-164 inhibits activity and promotes cell survival.

It is found in the endoplasmic reticulum membrane. The enzyme catalyses L-serine + hexadecanoyl-CoA + H(+) = 3-oxosphinganine + CO2 + CoA. It carries out the reaction octadecanoyl-CoA + L-serine + H(+) = 3-oxoeicosasphinganine + CO2 + CoA. The catalysed reaction is tetradecanoyl-CoA + L-serine + H(+) = 3-oxohexadecasphinganine + CO2 + CoA. It catalyses the reaction dodecanoyl-CoA + L-serine + H(+) = 3-oxotetradecasphinganine + CO2 + CoA. Its pathway is lipid metabolism; sphingolipid metabolism. SPT complex catalytic activity is negatively regulated by ORMDL proteins, including ORMDL3, in the presence of ceramides. This mechanism allows to maintain ceramide levels at sufficient concentrations for the production of complex sphingolipids, but which prevents the accumulation of ceramides to levels that trigger apoptosis. Functionally, component of the serine palmitoyltransferase multisubunit enzyme (SPT) that catalyzes the initial and rate-limiting step in sphingolipid biosynthesis by condensing L-serine and activated acyl-CoA (most commonly palmitoyl-CoA) to form long-chain bases. The SPT complex is also composed of SPTLC2 or SPTLC3 and SPTSSA or SPTSSB. Within this complex, the heterodimer with SPTLC2 or SPTLC3 forms the catalytic core. The composition of the serine palmitoyltransferase (SPT) complex determines the substrate preference. The SPTLC1-SPTLC2-SPTSSA complex shows a strong preference for C16-CoA substrate, while the SPTLC1-SPTLC3-SPTSSA isozyme uses both C14-CoA and C16-CoA as substrates, with a slight preference for C14-CoA. The SPTLC1-SPTLC2-SPTSSB complex shows a strong preference for C18-CoA substrate, while the SPTLC1-SPTLC3-SPTSSB isozyme displays an ability to use a broader range of acyl-CoAs, without apparent preference. Required for adipocyte cell viability and metabolic homeostasis. The polypeptide is Serine palmitoyltransferase 1 (SPTLC1) (Bos taurus (Bovine)).